Here is a 501-residue protein sequence, read N- to C-terminus: Type II secretion system protein E (501 aa).

262 to 269 (GPTGSGKS) is an ATP binding site. Residues C395, C398, C428, and C431 each contribute to the Zn(2+) site.

Belongs to the GSP E family. As to quaternary structure, forms homooligomers; most probably hexamers. Interacts with ExeL/GspL. It depends on Zn(2+) as a cofactor.

It is found in the cell inner membrane. The enzyme catalyses ATP + H2O + cellular proteinSide 1 = ADP + phosphate + cellular proteinSide 2.. In terms of biological role, ATPase component of the type II secretion system required for the energy-dependent secretion of extracellular factors such as proteases and toxins from the periplasm. Acts as a molecular motor to provide the energy that is required for assembly of the pseudopilus and the extrusion of substrates generated in the cytoplasm. The polypeptide is Type II secretion system protein E (exeE) (Aeromonas hydrophila).